Reading from the N-terminus, the 437-residue chain is MANVVVVGAQWGDEGKGKIVDWLSERADVIARFQGGHNAGHTLVIDKKVYKLHALPSGVVRGGKLSVIGNGVVLDPWHLMKEIETVRAQGVEITPETLMIAENTPLIMPFHGELDRAREEAASKGTKIGTTGRGIGPAYEDKVGRRAIRVADLADDATLEARVDRALQHHDPLRKGLGVEPIDRDALVAQLKEIASEILPFAAPVWKVMNEKRKAGKRILFEGAQGALLDIDFGTYPFVTSSNVIAGQAATGVGIGPNSIDYVLGIVKAYTTRVGEGPFPTELLGADGKPDADGERLGTRGHEFGTTTGRQRRCGWFDACLVRQTCATSGINGISLTKLDVLDGFETLKICVGYELDGERLDYLPTAADQQARCKPIYEEMEGWSESTEGARSWAELPANAIKYVRRVEELIQCPVALLSTSPERDDTILVTDPFAD.

GTP contacts are provided by residues 12–18 and 40–42; these read GDEGKGK and GHT. Aspartate 13 functions as the Proton acceptor in the catalytic mechanism. Positions 13 and 40 each coordinate Mg(2+). IMP-binding positions include 13-16, 38-41, threonine 131, arginine 145, glutamine 225, and threonine 240; these read DEGK and NAGH. The active-site Proton donor is the histidine 41. The tract at residues 281–304 is disordered; the sequence is TELLGADGKPDADGERLGTRGHEF. Over residues 288 to 303 the composition is skewed to basic and acidic residues; sequence GKPDADGERLGTRGHE. 306–312 lines the substrate pocket; the sequence is TTTGRQR. Arginine 310 serves as a coordination point for IMP. GTP is bound by residues arginine 312, 338–340, and 420–422; these read KLD and STS.

It belongs to the adenylosuccinate synthetase family. In terms of assembly, homodimer. Mg(2+) serves as cofactor.

It localises to the cytoplasm. It carries out the reaction IMP + L-aspartate + GTP = N(6)-(1,2-dicarboxyethyl)-AMP + GDP + phosphate + 2 H(+). It participates in purine metabolism; AMP biosynthesis via de novo pathway; AMP from IMP: step 1/2. Functionally, plays an important role in the de novo pathway of purine nucleotide biosynthesis. Catalyzes the first committed step in the biosynthesis of AMP from IMP. The polypeptide is Adenylosuccinate synthetase (Ruegeria sp. (strain TM1040) (Silicibacter sp.)).